The primary structure comprises 248 residues: MSLFPSLPLLLLSMVAASYSETVTCEDAQKTCPAVIACSSPGINGFPGKDGRDGTKGEKGEPGQGLRGLQGPPGKLGPPGNPGPSGSPGAKGQKGDPGASPDCDSSLANPERKTLQTEINRIKKWVTFSLGKQVGKKLFLTNGETMTFDKVKALCAQFQASVATPMNQAENRALQSLVKEEAFLGITDEETEGQFVDLTGRRLTYTNWNKGEPNNADSREDCVVLLRSGGWNDVPCSSSHLVICEFPV.

The N-terminal stretch at 1–20 (MSLFPSLPLLLLSMVAASYS) is a signal peptide. Positions 42–99 (GINGFPGKDGRDGTKGEKGEPGQGLRGLQGPPGKLGPPGNPGPSGSPGAKGQKGDPGA) constitute a Collagen-like domain. The interval 43 to 112 (INGFPGKDGR…CDSSLANPER (70 aa)) is disordered. Pro-47 bears the 4-hydroxyproline mark. Residues 49-61 (KDGRDGTKGEKGE) show a composition bias toward basic and acidic residues. Pro-73, Pro-79, Pro-82, and Pro-88 each carry 4-hydroxyproline. A coiled-coil region spans residues 112-130 (RKTLQTEINRIKKWVTFSL). The C-type lectin domain occupies 134–245 (VGKKLFLTNG…CSSSHLVICE (112 aa)). Intrachain disulfides connect Cys-155-Cys-244 and Cys-222-Cys-236.

As to quaternary structure, oligomeric complex of 3 or more homotrimers. Interacts with MASP1 and MASP2. Interacts with MEP1A and MEP1B and may inhibit their catalytic activity. Hydroxylation on proline residues within the sequence motif, GXPG, is most likely to be 4-hydroxy as this fits the requirement for 4-hydroxylation in vertebrates.

The protein localises to the secreted. Calcium-dependent lectin involved in innate immune defense. Binds mannose, fucose and N-acetylglucosamine on different microorganisms and activates the lectin complement pathway. Binds to late apoptotic cells, as well as to apoptotic blebs and to necrotic cells, but not to early apoptotic cells, facilitating their uptake by macrophages. The chain is Mannose-binding protein C (MBL2) from Callithrix jacchus (White-tufted-ear marmoset).